The following is a 197-amino-acid chain: Dephospho-CoA kinase (197 aa).

In terms of domain architecture, DPCK spans 4 to 197; the sequence is LIGLTGGIAT…VLKWLKTITK (194 aa). 12 to 17 provides a ligand contact to ATP; that stretch reads ATGKST.

It belongs to the CoaE family.

It localises to the cytoplasm. It carries out the reaction 3'-dephospho-CoA + ATP = ADP + CoA + H(+). The protein operates within cofactor biosynthesis; coenzyme A biosynthesis; CoA from (R)-pantothenate: step 5/5. In terms of biological role, catalyzes the phosphorylation of the 3'-hydroxyl group of dephosphocoenzyme A to form coenzyme A. The chain is Dephospho-CoA kinase from Lactiplantibacillus plantarum (strain ATCC BAA-793 / NCIMB 8826 / WCFS1) (Lactobacillus plantarum).